A 132-amino-acid chain; its full sequence is Small ribosomal subunit protein uS8 (132 aa).

It belongs to the universal ribosomal protein uS8 family. In terms of assembly, part of the 30S ribosomal subunit. Contacts proteins S5 and S12.

In terms of biological role, one of the primary rRNA binding proteins, it binds directly to 16S rRNA central domain where it helps coordinate assembly of the platform of the 30S subunit. The polypeptide is Small ribosomal subunit protein uS8 (Mycobacterium avium (strain 104)).